The primary structure comprises 433 residues: Agnestins efflux protein AgnL12 (433 aa).

2 stretches are compositionally biased toward polar residues: residues Met1–Gln10 and Ser25–Thr40. A disordered region spans residues Met1–Thr40. Transmembrane regions (helical) follow at residues Ile47–Phe67, Ile87–Tyr107, Leu116–Thr136, Ile141–Met161, Leu174–Leu194, Trp205–Ile225, Val248–Phe268, Phe285–Ile305, Val309–Trp329, Val335–Leu355, Gly370–Ile390, and Leu401–Ala421.

This sequence belongs to the major facilitator superfamily. Monocarboxylate porter (TC 2.A.1.13) family.

Its subcellular location is the cell membrane. In terms of biological role, efflux pump that may be involved in the secretion of agnestins, dihydroxy-xanthone metabolites. In Paecilomyces divaricatus (Penicillium divaricatum), this protein is Agnestins efflux protein AgnL12.